Here is a 361-residue protein sequence, read N- to C-terminus: Biotin synthase (361 aa).

Residues 63–290 (NTVQLSTLLS…RAMVRLSAGR (228 aa)) form the Radical SAM core domain. Residues cysteine 78, cysteine 82, and cysteine 85 each coordinate [4Fe-4S] cluster. [2Fe-2S] cluster contacts are provided by cysteine 122, cysteine 153, cysteine 213, and arginine 285.

The protein belongs to the radical SAM superfamily. Biotin synthase family. As to quaternary structure, homodimer. It depends on [4Fe-4S] cluster as a cofactor. The cofactor is [2Fe-2S] cluster.

It catalyses the reaction (4R,5S)-dethiobiotin + (sulfur carrier)-SH + 2 reduced [2Fe-2S]-[ferredoxin] + 2 S-adenosyl-L-methionine = (sulfur carrier)-H + biotin + 2 5'-deoxyadenosine + 2 L-methionine + 2 oxidized [2Fe-2S]-[ferredoxin]. It participates in cofactor biosynthesis; biotin biosynthesis; biotin from 7,8-diaminononanoate: step 2/2. In terms of biological role, catalyzes the conversion of dethiobiotin (DTB) to biotin by the insertion of a sulfur atom into dethiobiotin via a radical-based mechanism. This is Biotin synthase from Paraburkholderia phytofirmans (strain DSM 17436 / LMG 22146 / PsJN) (Burkholderia phytofirmans).